We begin with the raw amino-acid sequence, 440 residues long: Glutamate--tRNA ligase 2 (440 aa).

Positions 8-18 match the 'HIGH' region motif; it reads PSPTGYLHVGN. A 'KMSKS' region motif is present at residues 239 to 243; it reads ALSKR. Lys-242 is an ATP binding site.

Belongs to the class-I aminoacyl-tRNA synthetase family. Glutamate--tRNA ligase type 1 subfamily. As to quaternary structure, monomer.

Its subcellular location is the cytoplasm. The catalysed reaction is tRNA(Glu) + L-glutamate + ATP = L-glutamyl-tRNA(Glu) + AMP + diphosphate. Catalyzes the attachment of glutamate to tRNA(Glu) in a two-step reaction: glutamate is first activated by ATP to form Glu-AMP and then transferred to the acceptor end of tRNA(Glu). In Dinoroseobacter shibae (strain DSM 16493 / NCIMB 14021 / DFL 12), this protein is Glutamate--tRNA ligase 2.